The sequence spans 341 residues: Uroporphyrinogen decarboxylase (341 aa).

Residues 25–29, Phe44, Asp74, Tyr151, Ser206, and His318 contribute to the substrate site; that span reads RQAGR.

This sequence belongs to the uroporphyrinogen decarboxylase family. As to quaternary structure, homodimer.

Its subcellular location is the cytoplasm. The enzyme catalyses uroporphyrinogen III + 4 H(+) = coproporphyrinogen III + 4 CO2. The protein operates within porphyrin-containing compound metabolism; protoporphyrin-IX biosynthesis; coproporphyrinogen-III from 5-aminolevulinate: step 4/4. Its function is as follows. Catalyzes the decarboxylation of four acetate groups of uroporphyrinogen-III to yield coproporphyrinogen-III. The chain is Uroporphyrinogen decarboxylase from Christiangramia forsetii (strain DSM 17595 / CGMCC 1.15422 / KT0803) (Gramella forsetii).